Here is a 258-residue protein sequence, read N- to C-terminus: tRNA pseudouridine synthase A (258 aa).

Asp53 functions as the Nucleophile in the catalytic mechanism. Tyr111 contacts substrate.

It belongs to the tRNA pseudouridine synthase TruA family. Homodimer.

It catalyses the reaction uridine(38/39/40) in tRNA = pseudouridine(38/39/40) in tRNA. Formation of pseudouridine at positions 38, 39 and 40 in the anticodon stem and loop of transfer RNAs. The chain is tRNA pseudouridine synthase A from Streptococcus agalactiae serotype III (strain NEM316).